We begin with the raw amino-acid sequence, 224 residues long: LOB domain-containing protein 15 (224 aa).

In terms of domain architecture, LOB spans 44 to 145 (TPCAACKLLR…AELTAVRSEI (102 aa)). The disordered stretch occupies residues 171–224 (SGGVSVIAPPPQRPTTPPQPTTAHPPSPSSCVFSQPTTRDLEYGNIESENNYFG). Residues 178–198 (APPPQRPTTPPQPTTAHPPSP) are compositionally biased toward pro residues.

Belongs to the LOB domain-containing protein family. As to expression, expressed in young shoots, roots, stems, leaves and flowers.

The protein is LOB domain-containing protein 15 (LBD15) of Arabidopsis thaliana (Mouse-ear cress).